The sequence spans 82 residues: uncharacterized protein (82 aa).

Over residues 55-64 the composition is skewed to polar residues; it reads DQNTAPSTPS. The segment at 55-82 is disordered; sequence DQNTAPSTPSKILPKRLPSQSNLNNNNN.

This is an uncharacterized protein from Dictyostelium discoideum (Social amoeba).